The primary structure comprises 421 residues: Imidazolonepropionase (421 aa).

The Fe(3+) site is built by H81 and H83. The Zn(2+) site is built by H81 and H83. Positions 90, 153, and 186 each coordinate 4-imidazolone-5-propanoate. Y153 is an N-formimidoyl-L-glutamate binding site. H251 lines the Fe(3+) pocket. H251 is a binding site for Zn(2+). 4-imidazolone-5-propanoate is bound at residue E254. D326 is a Fe(3+) binding site. D326 serves as a coordination point for Zn(2+). The N-formimidoyl-L-glutamate site is built by N328 and G330. Residue S331 coordinates 4-imidazolone-5-propanoate.

Belongs to the metallo-dependent hydrolases superfamily. HutI family. Requires Zn(2+) as cofactor. It depends on Fe(3+) as a cofactor.

The protein localises to the cytoplasm. The enzyme catalyses 4-imidazolone-5-propanoate + H2O = N-formimidoyl-L-glutamate. The protein operates within amino-acid degradation; L-histidine degradation into L-glutamate; N-formimidoyl-L-glutamate from L-histidine: step 3/3. In terms of biological role, catalyzes the hydrolytic cleavage of the carbon-nitrogen bond in imidazolone-5-propanoate to yield N-formimidoyl-L-glutamate. It is the third step in the universal histidine degradation pathway. This chain is Imidazolonepropionase, found in Streptococcus pyogenes serotype M1.